The sequence spans 247 residues: 1-(5-phosphoribosyl)-5-[(5-phosphoribosylamino)methylideneamino] imidazole-4-carboxamide isomerase 2 (247 aa).

Glu-8 serves as the catalytic Proton acceptor. The Proton donor role is filled by Asp-128.

It belongs to the HisA/HisF family.

It localises to the cytoplasm. It carries out the reaction 1-(5-phospho-beta-D-ribosyl)-5-[(5-phospho-beta-D-ribosylamino)methylideneamino]imidazole-4-carboxamide = 5-[(5-phospho-1-deoxy-D-ribulos-1-ylimino)methylamino]-1-(5-phospho-beta-D-ribosyl)imidazole-4-carboxamide. Its pathway is amino-acid biosynthesis; L-histidine biosynthesis; L-histidine from 5-phospho-alpha-D-ribose 1-diphosphate: step 4/9. The polypeptide is 1-(5-phosphoribosyl)-5-[(5-phosphoribosylamino)methylideneamino] imidazole-4-carboxamide isomerase 2 (Ruegeria pomeroyi (strain ATCC 700808 / DSM 15171 / DSS-3) (Silicibacter pomeroyi)).